We begin with the raw amino-acid sequence, 633 residues long: ATP-dependent clpX-like chaperone, mitochondrial (633 aa).

The transit peptide at 1-56 (MSSCGACTCGAAAARLLTTSLTSAQRGISCGRIHVPVLGRLGTLDTQILRRAPLRT) directs the protein to the mitochondrion. The disordered stretch occupies residues 65–101 (ASKDGTNKDGSGDGNKKSVTEGSSKKSGSGNSGKGGN). Over residues 69–83 (GTNKDGSGDGNKKSV) the composition is skewed to basic and acidic residues. Low complexity predominate over residues 84–93 (TEGSSKKSGS). The 54-residue stretch at 93 to 146 (SGNSGKGGNQLRCPKCGDLCTHVETFVSSTRFVKCEKCHHFFVVLSEADSKKSI) folds into the ClpX-type ZB domain. Residues Cys-105, Cys-108, Cys-127, and Cys-130 each coordinate Zn(2+). 294–301 (PTGSGKTL) contributes to the ATP binding site. Lys-437 carries the N6-acetyllysine modification. Residues 598–610 (KEPGYIRAPSKES) show a composition bias toward basic and acidic residues. The segment at 598-633 (KEPGYIRAPSKESSEEDYDSGVEEDGWPRQADAANS) is disordered. Residues 611–622 (SEEDYDSGVEED) show a composition bias toward acidic residues. A Phosphoserine modification is found at Ser-617.

This sequence belongs to the ClpX chaperone family. As to quaternary structure, homohexamer that forms a ring structure; this hexamerization requires ATP binding. Component of the ClpXP complex formed by the assembly of two CLPP heptameric rings with two CLPX hexameric rings, giving rise to a symmetrical structure with two central CLPP rings flanked by a CLPX ring at either end of the complex. Interacts with TFAM.

It localises to the mitochondrion. The protein resides in the mitochondrion matrix. The protein localises to the mitochondrion nucleoid. The catalysed reaction is ATP + H2O = ADP + phosphate + H(+). Functionally, ATP-dependent chaperone that functions as an unfoldase. As part of the ClpXP protease complex, it recognizes specific protein substrates, unfolds them using energy derived from ATP hydrolysis, and then translocates them to the proteolytic subunit (CLPP) of the ClpXP complex for degradation. Thanks to its chaperone activity, it also functions in the incorporation of the pyridoxal phosphate cofactor into 5-aminolevulinate synthase, thereby activating 5-aminolevulinate (ALA) synthesis, the first step in heme biosynthesis. This chaperone is also involved in the control of mtDNA nucleoid distribution, by regulating mitochondrial transcription factor A (TFAM) activity. The protein is ATP-dependent clpX-like chaperone, mitochondrial of Rattus norvegicus (Rat).